The following is a 262-amino-acid chain: Indole-3-glycerol phosphate synthase (262 aa).

This sequence belongs to the TrpC family.

It carries out the reaction 1-(2-carboxyphenylamino)-1-deoxy-D-ribulose 5-phosphate + H(+) = (1S,2R)-1-C-(indol-3-yl)glycerol 3-phosphate + CO2 + H2O. It participates in amino-acid biosynthesis; L-tryptophan biosynthesis; L-tryptophan from chorismate: step 4/5. This Bordetella pertussis (strain Tohama I / ATCC BAA-589 / NCTC 13251) protein is Indole-3-glycerol phosphate synthase.